Reading from the N-terminus, the 105-residue chain is Meiotically up-regulated gene 52 protein (105 aa).

Functionally, has a role in meiosis. The protein is Meiotically up-regulated gene 52 protein (mug52) of Schizosaccharomyces pombe (strain 972 / ATCC 24843) (Fission yeast).